We begin with the raw amino-acid sequence, 1083 residues long: Regulator of the glycerol channel 1 (1083 aa).

Disordered regions lie at residues 1 to 46 and 69 to 89; these read MSDY…GSSD and LKNE…KENK. Residues 13 to 31 show a composition bias toward polar residues; the sequence is GGISKQPATPGSTRSSSRN. Ser-136, Ser-249, Ser-252, Ser-481, and Ser-537 each carry phosphoserine. Residues 495 to 606 form the PH domain; sequence CIRVGYLLKK…DCSLKDSTDS (112 aa). The interval 534–582 is disordered; the sequence is DSKSPRSKNKPVVEQSDISRVNKDGTNAGSHPSSKGTQDPKLTKRRKGL. Positions 549-570 are enriched in polar residues; the sequence is SDISRVNKDGTNAGSHPSSKGT. Phosphoserine occurs at positions 652, 765, and 813. Thr-817 and Thr-857 each carry phosphothreonine. Residues Ser-866, Ser-879, Ser-918, Ser-966, Ser-969, and Ser-975 each carry the phosphoserine modification. The segment at 979–1083 is disordered; it reads EENRTQNCSG…TVPATSASSK (105 aa). Composition is skewed to polar residues over residues 983-992, 1043-1061, and 1071-1083; these read TQNCSGSRKS, LKKT…VSND, and STNT…ASSK. 3 positions are modified to phosphoserine: Ser-1059, Ser-1081, and Ser-1082.

It belongs to the RGC1 family.

The protein localises to the cytoplasm. In terms of biological role, positive regulator of FPS1 glycerol channel required for the glycerol efflux. This chain is Regulator of the glycerol channel 1 (RGC1), found in Saccharomyces cerevisiae (strain ATCC 204508 / S288c) (Baker's yeast).